Here is a 341-residue protein sequence, read N- to C-terminus: L-threonine 3-dehydrogenase (341 aa).

A Zn(2+)-binding site is contributed by Cys-38. Catalysis depends on charge relay system residues Thr-40 and His-43. His-63, Glu-64, Cys-93, Cys-96, Cys-99, and Cys-107 together coordinate Zn(2+). Residues Ile-175, Asp-195, Arg-200, 262–264, and 286–287 contribute to the NAD(+) site; these read LGI and IY.

The protein belongs to the zinc-containing alcohol dehydrogenase family. In terms of assembly, homotetramer. Zn(2+) is required as a cofactor.

The protein resides in the cytoplasm. It catalyses the reaction L-threonine + NAD(+) = (2S)-2-amino-3-oxobutanoate + NADH + H(+). Its pathway is amino-acid degradation; L-threonine degradation via oxydo-reductase pathway; glycine from L-threonine: step 1/2. Its function is as follows. Catalyzes the NAD(+)-dependent oxidation of L-threonine to 2-amino-3-ketobutyrate. In Shewanella halifaxensis (strain HAW-EB4), this protein is L-threonine 3-dehydrogenase.